Here is a 242-residue protein sequence, read N- to C-terminus: Biosynthetic peptidoglycan transglycosylase (242 aa).

The chain crosses the membrane as a helical span at residues 19 to 39 (ILAALAVFWGGGIALFSVVPV).

Belongs to the glycosyltransferase 51 family.

Its subcellular location is the cell inner membrane. The enzyme catalyses [GlcNAc-(1-&gt;4)-Mur2Ac(oyl-L-Ala-gamma-D-Glu-L-Lys-D-Ala-D-Ala)](n)-di-trans,octa-cis-undecaprenyl diphosphate + beta-D-GlcNAc-(1-&gt;4)-Mur2Ac(oyl-L-Ala-gamma-D-Glu-L-Lys-D-Ala-D-Ala)-di-trans,octa-cis-undecaprenyl diphosphate = [GlcNAc-(1-&gt;4)-Mur2Ac(oyl-L-Ala-gamma-D-Glu-L-Lys-D-Ala-D-Ala)](n+1)-di-trans,octa-cis-undecaprenyl diphosphate + di-trans,octa-cis-undecaprenyl diphosphate + H(+). The protein operates within cell wall biogenesis; peptidoglycan biosynthesis. Functionally, peptidoglycan polymerase that catalyzes glycan chain elongation from lipid-linked precursors. This chain is Biosynthetic peptidoglycan transglycosylase, found in Salmonella agona (strain SL483).